The following is a 145-amino-acid chain: Transcriptional regulator MraZ (145 aa).

SpoVT-AbrB domains are found at residues 5 to 50 (TFNH…ALPQ) and 81 to 124 (AHEV…DRAA).

Belongs to the MraZ family. As to quaternary structure, forms oligomers.

The protein resides in the cytoplasm. It is found in the nucleoid. This chain is Transcriptional regulator MraZ, found in Anaeromyxobacter dehalogenans (strain 2CP-1 / ATCC BAA-258).